The sequence spans 335 residues: Methionine import ATP-binding protein MetN (335 aa).

Residues 2–241 (IQFQRLHKSY…PQHPTTRRFV (240 aa)) enclose the ABC transporter domain. 38–45 (GHSGAGKS) provides a ligand contact to ATP.

This sequence belongs to the ABC transporter superfamily. Methionine importer (TC 3.A.1.24) family. As to quaternary structure, the complex is composed of two ATP-binding proteins (MetN), two transmembrane proteins (MetI) and a solute-binding protein (MetQ).

It localises to the cell inner membrane. The catalysed reaction is L-methionine(out) + ATP + H2O = L-methionine(in) + ADP + phosphate + H(+). The enzyme catalyses D-methionine(out) + ATP + H2O = D-methionine(in) + ADP + phosphate + H(+). Functionally, part of the ABC transporter complex MetNIQ involved in methionine import. Responsible for energy coupling to the transport system. The sequence is that of Methionine import ATP-binding protein MetN from Xanthomonas campestris pv. campestris (strain 8004).